Reading from the N-terminus, the 101-residue chain is MMFEYALVLSSYLFSMGIYGLITSRNMVRALMCLELILNAVNMNLVTFSDLFDSRQLKGDIFSIFVIAIAAAEAAIGPAIVSSIHRNRKSTRINQSNLLKK.

Helical transmembrane passes span 2–22, 32–52, and 61–81; these read MFEYALVLSSYLFSMGIYGLI, MCLELILNAVNMNLVTFSDLF, and IFSIFVIAIAAAEAAIGPAIV.

Belongs to the complex I subunit 4L family. In terms of assembly, NDH is composed of at least 16 different subunits, 5 of which are encoded in the nucleus.

The protein localises to the plastid. It localises to the chloroplast thylakoid membrane. It catalyses the reaction a plastoquinone + NADH + (n+1) H(+)(in) = a plastoquinol + NAD(+) + n H(+)(out). The catalysed reaction is a plastoquinone + NADPH + (n+1) H(+)(in) = a plastoquinol + NADP(+) + n H(+)(out). Functionally, NDH shuttles electrons from NAD(P)H:plastoquinone, via FMN and iron-sulfur (Fe-S) centers, to quinones in the photosynthetic chain and possibly in a chloroplast respiratory chain. The immediate electron acceptor for the enzyme in this species is believed to be plastoquinone. Couples the redox reaction to proton translocation, and thus conserves the redox energy in a proton gradient. The sequence is that of NAD(P)H-quinone oxidoreductase subunit 4L, chloroplastic from Amborella trichopoda.